Here is a 332-residue protein sequence, read N- to C-terminus: Galectin-4 (332 aa).

2 Galectin domains span residues 19–150 (YHNP…INFI) and 203–332 (FNGR…YVQI). 265–271 (WGSEERK) serves as a coordination point for a beta-D-galactoside. Ser267 carries the post-translational modification Phosphoserine.

Monomer.

In terms of biological role, galectin that binds lactose and a related range of sugars. May be involved in the assembly of adherens junctions. The chain is Galectin-4 (LGALS4) from Bos taurus (Bovine).